A 61-amino-acid chain; its full sequence is Small ribosomal subunit protein uS14 (61 aa).

The Zn(2+) site is built by Cys-24, Cys-27, Cys-40, and Cys-43.

The protein belongs to the universal ribosomal protein uS14 family. Zinc-binding uS14 subfamily. In terms of assembly, part of the 30S ribosomal subunit. Contacts proteins S3 and S10. The cofactor is Zn(2+).

Functionally, binds 16S rRNA, required for the assembly of 30S particles and may also be responsible for determining the conformation of the 16S rRNA at the A site. This Deinococcus deserti (strain DSM 17065 / CIP 109153 / LMG 22923 / VCD115) protein is Small ribosomal subunit protein uS14.